A 406-amino-acid chain; its full sequence is 8-amino-7-oxononanoate synthase (406 aa).

R21 is a substrate binding site. G112–Y113 serves as a coordination point for pyridoxal 5'-phosphate. H137 provides a ligand contact to substrate. Residues S183, H211, and T239 each coordinate pyridoxal 5'-phosphate. The residue at position 242 (K242) is an N6-(pyridoxal phosphate)lysine. T358 provides a ligand contact to substrate.

It belongs to the class-II pyridoxal-phosphate-dependent aminotransferase family. BioF subfamily. As to quaternary structure, homodimer. It depends on pyridoxal 5'-phosphate as a cofactor.

The enzyme catalyses 6-carboxyhexanoyl-[ACP] + L-alanine + H(+) = (8S)-8-amino-7-oxononanoate + holo-[ACP] + CO2. It participates in cofactor biosynthesis; biotin biosynthesis. Functionally, catalyzes the decarboxylative condensation of pimeloyl-[acyl-carrier protein] and L-alanine to produce 8-amino-7-oxononanoate (AON), [acyl-carrier protein], and carbon dioxide. The chain is 8-amino-7-oxononanoate synthase from Burkholderia orbicola (strain MC0-3).